The sequence spans 341 residues: S-adenosylmethionine:tRNA ribosyltransferase-isomerase (341 aa).

This sequence belongs to the QueA family. As to quaternary structure, monomer.

It localises to the cytoplasm. The catalysed reaction is 7-aminomethyl-7-carbaguanosine(34) in tRNA + S-adenosyl-L-methionine = epoxyqueuosine(34) in tRNA + adenine + L-methionine + 2 H(+). The protein operates within tRNA modification; tRNA-queuosine biosynthesis. Functionally, transfers and isomerizes the ribose moiety from AdoMet to the 7-aminomethyl group of 7-deazaguanine (preQ1-tRNA) to give epoxyqueuosine (oQ-tRNA). In Staphylococcus saprophyticus subsp. saprophyticus (strain ATCC 15305 / DSM 20229 / NCIMB 8711 / NCTC 7292 / S-41), this protein is S-adenosylmethionine:tRNA ribosyltransferase-isomerase.